The chain runs to 115 residues: T cell receptor delta variable 2 (115 aa).

The first 19 residues, 1 to 19 (MQRISSLIHLSLFWAGVMS), serve as a signal peptide directing secretion. The Ig-like domain maps to 25 to 115 (PEHQTVPVSI…EGSYYCACDT (91 aa)). The cysteines at positions 42 and 111 are disulfide-linked.

In terms of assembly, gamma-delta TR is a heterodimer composed of a gamma and delta chain; disulfide-linked. The gamma-delta TR is associated with the transmembrane signaling CD3 coreceptor proteins following the stoichiometry: a single gamma-delta TR heterodimer associates with one CD3D-CD3E heterodimer, one CD3G-CD3E heterodimer and one CD247 homodimer forming a stable octameric structure. Upon activation, gamma-delta TR complex associates with FCER1G to initiate intracellular signaling.

The protein localises to the cell membrane. Functionally, v region of the variable domain of T cell receptor (TR) delta chain that participates in the antigen recognition. Gamma-delta TRs recognize a variety of self and foreign non-peptide antigens frequently expressed at the epithelial boundaries between the host and external environment, including endogenous lipids presented by MH-like protein CD1D and phosphoantigens presented by butyrophilin-like molecule BTN3A1. Upon antigen recognition induces rapid, innate-like immune responses involved in pathogen clearance and tissue repair. Binding of gamma-delta TR complex to antigen triggers phosphorylation of immunoreceptor tyrosine-based activation motifs (ITAMs) in the CD3 chains by the LCK and FYN kinases, allowing the recruitment, phosphorylation, and activation of ZAP70 that facilitates phosphorylation of the scaffolding proteins LCP2 and LAT. This lead to the formation of a supramolecular signalosome that recruits the phospholipase PLCG1, resulting in calcium mobilization and ERK activation, ultimately leading to T cell expansion and differentiation into effector cells. Gamma-delta TRs are produced through somatic rearrangement of a limited repertoire of variable (V), diversity (D), and joining (J) genes. The potential diversity of gamma-delta TRs is conferred by the unique ability to rearrange (D) genes in tandem and to utilize all three reading frames. The combinatorial diversity is considerably increased by the sequence exonuclease trimming and random nucleotide (N) region additions which occur during the V-(D)-J rearrangements. This is T cell receptor delta variable 2 from Homo sapiens (Human).